Reading from the N-terminus, the 583-residue chain is L-galactono-1,4-lactone dehydrogenase 1, mitochondrial (583 aa).

A mitochondrion-targeting transit peptide spans 1 to 36 (MRRLLLAGILRRASSSPSSHHHLHLVRALSASSPLP). Positions 37–78 (ASDADLRKYAGYALLLLGCGAATYYSFPLPPDALHKKAVPFK) are cleaved as a propeptide — removed in mature form. A helical membrane pass occupies residues 45–61 (YAGYALLLLGCGAATYY). Residues 95-266 (THEVHTRVLL…AEVTLQCVER (172 aa)) form the FAD-binding PCMH-type domain.

FAD serves as cofactor.

The protein resides in the mitochondrion membrane. The catalysed reaction is L-galactono-1,4-lactone + 4 Fe(III)-[cytochrome c] = L-dehydroascorbate + 4 Fe(II)-[cytochrome c] + 5 H(+). The protein operates within cofactor biosynthesis; L-ascorbate biosynthesis. Involved in the biosynthesis of ascorbic acid. This Oryza sativa subsp. japonica (Rice) protein is L-galactono-1,4-lactone dehydrogenase 1, mitochondrial (GLDH1).